We begin with the raw amino-acid sequence, 108 residues long: Peptidyl-prolyl cis-trans isomerase FKBP1A (108 aa).

Ser-10 is modified (phosphoserine). Residues 20-108 enclose the PPIase FKBP-type domain; the sequence is GQTCVVHYTG…VFDVELLKLE (89 aa). Position 53 is an N6-acetyllysine; alternate (Lys-53). Position 53 is an N6-succinyllysine; alternate (Lys-53).

This sequence belongs to the FKBP-type PPIase family. FKBP1 subfamily. Interacts with TGFBR1; prevents TGFBR1 phosphorylation by TGFBR2 and stabilizes it in the inactive conformation. Interacts with ACVR1B and SMAD7. Identified in a complex composed of RYR1, PDE4D, PKA, FKBP1A and protein phosphatase 1 (PP1). Interacts directly with RYR2. Interacts directly with RYR3. Interacts directly with RYR1. Interacts with GLMN; rapamycin and FK506 abolish the interaction with GLMN in a dose dependent manner. In terms of tissue distribution, ubiquitous.

Its subcellular location is the cytoplasm. It localises to the cytosol. The protein resides in the sarcoplasmic reticulum membrane. It catalyses the reaction [protein]-peptidylproline (omega=180) = [protein]-peptidylproline (omega=0). Inhibited by both FK506 and rapamycin. Functionally, keeps in an inactive conformation TGFBR1, the TGF-beta type I serine/threonine kinase receptor, preventing TGF-beta receptor activation in absence of ligand. Recruits SMAD7 to ACVR1B which prevents the association of SMAD2 and SMAD3 with the activin receptor complex, thereby blocking the activin signal. May modulate the RYR1 calcium channel activity. PPIases accelerate the folding of proteins. It catalyzes the cis-trans isomerization of proline imidic peptide bonds in oligopeptides. In Rattus norvegicus (Rat), this protein is Peptidyl-prolyl cis-trans isomerase FKBP1A (Fkbp1a).